A 338-amino-acid chain; its full sequence is Diacylglycerol acyltransferase/mycolyltransferase Ag85A (338 aa).

Positions 1-42 (MQLVDRVRGAVTGMSRRLVVGAVGAALVSGLVGAVGGTATAG) are cleaved as a signal peptide. 85–86 (LR) lines the substrate pocket. The segment at 101-111 (FEWYDQSGLSV) is fibronectin-binding. A disulfide bridge connects residues Cys130 and Cys135. Substrate is bound by residues Ser169 and Asp197. Ser169 functions as the Nucleophile in the catalytic mechanism. Residue Glu273 is part of the active site. Substrate-binding positions include 275-278 (FVRT), Lys282, and 305-307 (HSW). The active site involves His305.

The protein belongs to the mycobacterial A85 antigen family. As to quaternary structure, homodimer.

The protein localises to the secreted. The protein resides in the cell wall. It localises to the cytoplasm. The enzyme catalyses an acyl-CoA + a 1,2-diacyl-sn-glycerol = a triacyl-sn-glycerol + CoA. It catalyses the reaction 2 alpha,alpha'-trehalose 6-mycolate = alpha,alpha'-trehalose 6,6'-bismycolate + alpha,alpha-trehalose. The antigen 85 proteins (FbpA, FbpB, FbpC) are responsible for the high affinity of mycobacteria for fibronectin, a large adhesive glycoprotein, which facilitates the attachment of M.tuberculosis to murine alveolar macrophages (AMs). They also help to maintain the integrity of the cell wall by catalyzing the transfer of mycolic acids to cell wall arabinogalactan, and through the synthesis of alpha,alpha-trehalose dimycolate (TDM, cord factor). They catalyze the transfer of a mycoloyl residue from one molecule of alpha,alpha-trehalose monomycolate (TMM) to another TMM, leading to the formation of TDM. FbpA mediates triacylglycerol (TAG) formation with long-chain acyl-CoA as the acyl donor and 1,2-dipalmitoyl-sn-glycerol (1,2-dipalmitin) as the acyl acceptor. It has a preference for C26:0-CoA over C18:1-CoA. This chain is Diacylglycerol acyltransferase/mycolyltransferase Ag85A (fbpA), found in Mycobacterium bovis (strain ATCC BAA-935 / AF2122/97).